The following is a 214-amino-acid chain: Serine protease inhibitor 2.1 (214 aa).

It belongs to the serpin family.

The sequence is that of Serine protease inhibitor 2.1 from Rattus norvegicus (Rat).